The primary structure comprises 293 residues: Ethanolamine ammonia-lyase small subunit (293 aa).

Residues V207 and E228 each coordinate adenosylcob(III)alamin.

It belongs to the EutC family. The basic unit is a heterodimer which dimerizes to form tetramers. The heterotetramers trimerize; 6 large subunits form a core ring with 6 small subunits projecting outwards. Adenosylcob(III)alamin serves as cofactor.

The protein resides in the bacterial microcompartment. It catalyses the reaction ethanolamine = acetaldehyde + NH4(+). It participates in amine and polyamine degradation; ethanolamine degradation. In terms of biological role, catalyzes the deamination of various vicinal amino-alcohols to oxo compounds. Allows this organism to utilize ethanolamine as the sole source of nitrogen and carbon in the presence of external vitamin B12. The chain is Ethanolamine ammonia-lyase small subunit from Listeria monocytogenes serovar 1/2a (strain ATCC BAA-679 / EGD-e).